The primary structure comprises 90 residues: Elongation factor 1-beta (90 aa).

It belongs to the EF-1-beta/EF-1-delta family.

Functionally, promotes the exchange of GDP for GTP in EF-1-alpha/GDP, thus allowing the regeneration of EF-1-alpha/GTP that could then be used to form the ternary complex EF-1-alpha/GTP/AAtRNA. In Staphylothermus marinus (strain ATCC 43588 / DSM 3639 / JCM 9404 / F1), this protein is Elongation factor 1-beta.